A 278-amino-acid chain; its full sequence is Replication protein A 32 kDa subunit B (278 aa).

A DNA-binding region (OB) is located at residues 70–143; the sequence is VVIVGRISRM…RSVNVFSVRP (74 aa).

This sequence belongs to the replication factor A protein 2 family. As to quaternary structure, heterotrimer of RPA1, RPA2 and RPA3 (canonical replication protein A complex). In terms of processing, phosphorylated in a cell-cycle-dependent manner (from the S phase until mitosis). In response to DNA damage, recruited to DNA-repair nuclear foci, as a hypophosphorylated form.

The protein localises to the nucleus. Functionally, component of the replication protein A complex (RPA) required for DNA recombination, repair and replication. The activity of RPA is mediated by single-stranded DNA binding and protein interactions. Required fo cell division in meristems. Involved in the maintenance of transcriptional epigenetic gene silencing (TGS) at specific loci (including some transposons) by regulating histone H3 acetylation, 'Lys-4' and 'Lys-9' methylation. This Arabidopsis thaliana (Mouse-ear cress) protein is Replication protein A 32 kDa subunit B (RPA2B).